The primary structure comprises 175 residues: Orotate phosphoribosyltransferase (175 aa).

5-phospho-alpha-D-ribose 1-diphosphate is bound by residues R88, K89, K92, and 114 to 122; that span reads EDVVTTARG. Orotate-binding residues include T118 and R146.

Belongs to the purine/pyrimidine phosphoribosyltransferase family. PyrE subfamily. As to quaternary structure, homodimer. Requires Mg(2+) as cofactor.

The enzyme catalyses orotidine 5'-phosphate + diphosphate = orotate + 5-phospho-alpha-D-ribose 1-diphosphate. The protein operates within pyrimidine metabolism; UMP biosynthesis via de novo pathway; UMP from orotate: step 1/2. Functionally, catalyzes the transfer of a ribosyl phosphate group from 5-phosphoribose 1-diphosphate to orotate, leading to the formation of orotidine monophosphate (OMP). This Methanocella arvoryzae (strain DSM 22066 / NBRC 105507 / MRE50) protein is Orotate phosphoribosyltransferase.